Here is a 150-residue protein sequence, read N- to C-terminus: 6,7-dimethyl-8-ribityllumazine synthase (150 aa).

5-amino-6-(D-ribitylamino)uracil contacts are provided by residues Phe11, 42-44 (IFE), and 73-75 (CAI). Residue 78–79 (ES) coordinates (2S)-2-hydroxy-3-oxobutyl phosphate. The active-site Proton donor is the His81. Asn106 serves as a coordination point for 5-amino-6-(D-ribitylamino)uracil. Arg120 lines the (2S)-2-hydroxy-3-oxobutyl phosphate pocket.

It belongs to the DMRL synthase family.

It catalyses the reaction (2S)-2-hydroxy-3-oxobutyl phosphate + 5-amino-6-(D-ribitylamino)uracil = 6,7-dimethyl-8-(1-D-ribityl)lumazine + phosphate + 2 H2O + H(+). Its pathway is cofactor biosynthesis; riboflavin biosynthesis; riboflavin from 2-hydroxy-3-oxobutyl phosphate and 5-amino-6-(D-ribitylamino)uracil: step 1/2. Its function is as follows. Catalyzes the formation of 6,7-dimethyl-8-ribityllumazine by condensation of 5-amino-6-(D-ribitylamino)uracil with 3,4-dihydroxy-2-butanone 4-phosphate. This is the penultimate step in the biosynthesis of riboflavin. The polypeptide is 6,7-dimethyl-8-ribityllumazine synthase (Paramagnetospirillum magneticum (strain ATCC 700264 / AMB-1) (Magnetospirillum magneticum)).